Here is a 260-residue protein sequence, read N- to C-terminus: Isopentenyl phosphate kinase (260 aa).

Position 6-10 (6-10 (KLGGS)) interacts with ATP. Residue glycine 55 coordinates substrate. Glycine 56 is a binding site for ATP. Substrate-binding residues include histidine 60 and glycine 159. The ATP site is built by aspartate 180, glycine 217, and lysine 221.

It belongs to the isopentenyl phosphate kinase family. As to quaternary structure, homodimer.

It carries out the reaction isopentenyl phosphate + ATP = isopentenyl diphosphate + ADP. Its function is as follows. Catalyzes the formation of isopentenyl diphosphate (IPP), the building block of all isoprenoids. Has no activity with farnesyl phosphate. This Methanocaldococcus jannaschii (strain ATCC 43067 / DSM 2661 / JAL-1 / JCM 10045 / NBRC 100440) (Methanococcus jannaschii) protein is Isopentenyl phosphate kinase.